The following is a 361-amino-acid chain: Replication-associated protein (361 aa).

Residues 8 to 116 (RINAKNYFLT…DGDVLDHGVF (109 aa)) form the CRESS-DNA virus Rep endonuclease domain. An RCR-1 motif is present at residues 15–18 (FLTY). A divalent metal cation is bound by residues E49, H57, and H59. The RCR-2 signature appears at 57–59 (HLH). The active-site For DNA cleavage activity is Y103. The RCR-3 signature appears at 103 to 106 (YMEK). D107 is a binding site for a divalent metal cation. Residues 143 to 153 (KASALNILREK) form a binding to RBR1 region. The oligomerization stretch occupies residues 156–176 (KDFVLQFHNLNSNLDRIFTPP). 221-228 (GDSRTGKT) contacts ATP.

This sequence belongs to the geminiviridae Rep protein family. Homooligomer. Interacts with the replication enhancer protein (REn). Interacts with host retinoblastoma-related protein 1 (RBR1), and may thereby induce the transcription of host replicative enzymes even if the cell is not dividing anymore. Interacts with host PCNA. Interacts with host SCE1 protein. It depends on Mg(2+) as a cofactor. Mn(2+) is required as a cofactor.

The protein resides in the host nucleus. In terms of biological role, essential for the replication of viral ssDNA. The closed circular ssDNA genome is first converted to a superhelical dsDNA. Rep binds a specific region at the genome origin of replication. It introduces an endonucleolytic nick within the conserved sequence 5'-TAATATTAC-3' in the intergenic region of the genome present in all geminiviruses, thereby initiating the rolling circle replication (RCR). Following cleavage, binds covalently to the 5'-phosphate of DNA as a tyrosyl ester. The cleavage gives rise to a free 3'-OH that serves as a primer for the cellular DNA polymerase. The polymerase synthesizes the (+) strand DNA by rolling circle mechanism. After one round of replication, a Rep-catalyzed nucleotidyl transfer reaction releases a circular single-stranded virus genome, thereby terminating the replication. Displays origin-specific DNA cleavage, nucleotidyl transferase, ATPase and helicase activities. The protein is Replication-associated protein of Tomato yellow leaf curl China virus (TYLCCNV).